A 209-amino-acid chain; its full sequence is CASP-like protein 1B1 (209 aa).

Positions Met1–Pro10 are enriched in basic and acidic residues. The disordered stretch occupies residues Met1–Pro39. The Cytoplasmic segment spans residues Met1–Gln49. Residues Arg19 to Ala32 show a composition bias toward low complexity. Residues Pro50–Leu70 form a helical membrane-spanning segment. The Extracellular portion of the chain corresponds to Asp71 to Ala100. Residues Phe101 to Val121 traverse the membrane as a helical segment. Residues Arg122–Arg134 are Cytoplasmic-facing. Residues Met135–Ala155 traverse the membrane as a helical segment. Residues Glu156 to Arg180 are Extracellular-facing. The helical transmembrane segment at Gly181–Leu201 threads the bilayer. The Cytoplasmic segment spans residues Ser202–Cys209.

It belongs to the Casparian strip membrane proteins (CASP) family. In terms of assembly, homodimer and heterodimers.

The protein resides in the cell membrane. This is CASP-like protein 1B1 from Zea mays (Maize).